The primary structure comprises 258 residues: uncharacterized protein (258 aa).

3 consecutive transmembrane segments (helical) span residues 38–58 (VFGL…LFIA), 72–92 (ALIF…IIFI), and 111–131 (FLVI…MLWW).

The protein resides in the cell membrane. This is an uncharacterized protein from Mycoplasma pneumoniae (strain ATCC 29342 / M129 / Subtype 1) (Mycoplasmoides pneumoniae).